Reading from the N-terminus, the 591-residue chain is Eukaryotic translation initiation factor 3 subunit D (591 aa).

A disordered region spans residues 100–159; sequence SGGNPDEDAAFRLVDGKPPPRPKFGPKWRFNPHHNRNQLPQRRDEEVEAKKRDAEKERAR. Residues 123 to 135 show a composition bias toward basic residues; sequence FGPKWRFNPHHNR. The segment covering 140 to 159 has biased composition (basic and acidic residues); that stretch reads QRRDEEVEAKKRDAEKERAR. Residues 309 to 323 are RNA gate; that stretch reads QLDLLSVHETSQEPL. Acidic residues predominate over residues 549–560; it reads DYVEEPLPEDEQ. The segment at 549–591 is disordered; that stretch reads DYVEEPLPEDEQVQPTEENTEGAEASVAATKETEEKKADDAQA. Basic and acidic residues predominate over residues 579 to 591; sequence KETEEKKADDAQA.

The protein belongs to the eIF-3 subunit D family. In terms of assembly, component of the eukaryotic translation initiation factor 3 (eIF-3) complex, which is composed of at least 13 different subunits.

The protein resides in the cytoplasm. Its function is as follows. mRNA cap-binding component of the eukaryotic translation initiation factor 3 (eIF-3) complex, which is involved in protein synthesis of a specialized repertoire of mRNAs and, together with other initiation factors, stimulates binding of mRNA and methionyl-tRNAi to the 40S ribosome. The eIF-3 complex specifically targets and initiates translation of a subset of mRNAs involved in cell proliferation. In the eIF-3 complex, eif3d specifically recognizes and binds the 7-methylguanosine cap of a subset of mRNAs. This chain is Eukaryotic translation initiation factor 3 subunit D (TIF3D1), found in Arabidopsis thaliana (Mouse-ear cress).